We begin with the raw amino-acid sequence, 79 residues long: Exodeoxyribonuclease 7 small subunit (79 aa).

The protein belongs to the XseB family. As to quaternary structure, heterooligomer composed of large and small subunits.

It localises to the cytoplasm. The enzyme catalyses Exonucleolytic cleavage in either 5'- to 3'- or 3'- to 5'-direction to yield nucleoside 5'-phosphates.. Bidirectionally degrades single-stranded DNA into large acid-insoluble oligonucleotides, which are then degraded further into small acid-soluble oligonucleotides. This is Exodeoxyribonuclease 7 small subunit from Lactococcus lactis subsp. cremoris (strain MG1363).